The sequence spans 954 residues: Glycine dehydrogenase (decarboxylating) (954 aa).

Position 704 is an N6-(pyridoxal phosphate)lysine (lysine 704).

It belongs to the GcvP family. In terms of assembly, the glycine cleavage system is composed of four proteins: P, T, L and H. Requires pyridoxal 5'-phosphate as cofactor.

The enzyme catalyses N(6)-[(R)-lipoyl]-L-lysyl-[glycine-cleavage complex H protein] + glycine + H(+) = N(6)-[(R)-S(8)-aminomethyldihydrolipoyl]-L-lysyl-[glycine-cleavage complex H protein] + CO2. The glycine cleavage system catalyzes the degradation of glycine. The P protein binds the alpha-amino group of glycine through its pyridoxal phosphate cofactor; CO(2) is released and the remaining methylamine moiety is then transferred to the lipoamide cofactor of the H protein. The sequence is that of Glycine dehydrogenase (decarboxylating) from Rhizobium leguminosarum bv. trifolii (strain WSM2304).